The chain runs to 343 residues: Protease HtpX homolog (343 aa).

A run of 2 helical transmembrane segments spans residues 7-24 and 29-46; these read TMLL…GYLV and GMVV…FSYW. His-130 provides a ligand contact to Zn(2+). Residue Glu-131 is part of the active site. His-134 provides a ligand contact to Zn(2+). Helical transmembrane passes span 145–165 and 177–197; these read LTAT…LMGM and GAGM…AMLV. Position 206 (Glu-206) interacts with Zn(2+). The disordered stretch occupies residues 308-343; sequence NLEDEDLNPEAQNGFTHNQKKKTVRRGKDRPTWLRH. A compositionally biased stretch (basic residues) spans 325–335; that stretch reads NQKKKTVRRGK.

It belongs to the peptidase M48B family. It depends on Zn(2+) as a cofactor.

Its subcellular location is the cell inner membrane. The sequence is that of Protease HtpX homolog from Bartonella bacilliformis (strain ATCC 35685 / KC583 / Herrer 020/F12,63).